The chain runs to 459 residues: Bifunctional protein GlmU (459 aa).

The tract at residues 1-229 is pyrophosphorylase; it reads MTNYAIILAA…FDESLGVNDR (229 aa). Residues 8-11, Lys22, Gln72, and 77-78 each bind UDP-N-acetyl-alpha-D-glucosamine; these read LAAG and GT. Mg(2+) is bound at residue Asp102. Residues Gly139, Glu154, Asn169, and Asn227 each contribute to the UDP-N-acetyl-alpha-D-glucosamine site. Mg(2+) is bound at residue Asn227. The segment at 230 to 250 is linker; sequence VALAKAEKVMRRRINHAHMVN. Residues 251–459 form an N-acetyltransferase region; the sequence is GVTLTNPAST…KKKPHHPNNK (209 aa). UDP-N-acetyl-alpha-D-glucosamine is bound by residues Arg332 and Lys350. His362 serves as the catalytic Proton acceptor. Residues Tyr365 and Asn376 each coordinate UDP-N-acetyl-alpha-D-glucosamine. Acetyl-CoA is bound by residues Ala379, 385-386, Ser404, Ala422, and Arg439; that span reads NY.

It in the N-terminal section; belongs to the N-acetylglucosamine-1-phosphate uridyltransferase family. The protein in the C-terminal section; belongs to the transferase hexapeptide repeat family. In terms of assembly, homotrimer. Requires Mg(2+) as cofactor.

Its subcellular location is the cytoplasm. It carries out the reaction alpha-D-glucosamine 1-phosphate + acetyl-CoA = N-acetyl-alpha-D-glucosamine 1-phosphate + CoA + H(+). It catalyses the reaction N-acetyl-alpha-D-glucosamine 1-phosphate + UTP + H(+) = UDP-N-acetyl-alpha-D-glucosamine + diphosphate. The protein operates within nucleotide-sugar biosynthesis; UDP-N-acetyl-alpha-D-glucosamine biosynthesis; N-acetyl-alpha-D-glucosamine 1-phosphate from alpha-D-glucosamine 6-phosphate (route II): step 2/2. It participates in nucleotide-sugar biosynthesis; UDP-N-acetyl-alpha-D-glucosamine biosynthesis; UDP-N-acetyl-alpha-D-glucosamine from N-acetyl-alpha-D-glucosamine 1-phosphate: step 1/1. Its pathway is bacterial outer membrane biogenesis; LPS lipid A biosynthesis. Its function is as follows. Catalyzes the last two sequential reactions in the de novo biosynthetic pathway for UDP-N-acetylglucosamine (UDP-GlcNAc). The C-terminal domain catalyzes the transfer of acetyl group from acetyl coenzyme A to glucosamine-1-phosphate (GlcN-1-P) to produce N-acetylglucosamine-1-phosphate (GlcNAc-1-P), which is converted into UDP-GlcNAc by the transfer of uridine 5-monophosphate (from uridine 5-triphosphate), a reaction catalyzed by the N-terminal domain. The chain is Bifunctional protein GlmU from Streptococcus mutans serotype c (strain ATCC 700610 / UA159).